A 427-amino-acid chain; its full sequence is NADH-quinone oxidoreductase subunit 14 (427 aa).

14 helical membrane passes run Met1 to Pro21, Leu30 to Phe50, Gly57 to Val77, Ser79 to Ala99, Leu104 to Trp124, Phe137 to Ala157, Tyr172 to Phe192, Pro204 to Leu224, Pro230 to Ala250, Leu257 to Asn277, Ala280 to Ser300, Leu322 to Phe342, Val360 to Leu380, and Ala400 to Leu420.

It belongs to the complex I subunit 2 family. NDH-1 is composed of 15 different subunits, Nqo1 to Nqo15. The complex has a L-shaped structure, with the hydrophobic arm (subunits Nqo7, Nqo8 and Nqo10 to Nqo14) embedded in the membrane and the hydrophilic peripheral arm (subunits Nqo1 to Nqo6, Nqo9 and Nqo15) protruding into the bacterial cytoplasm. The hydrophilic domain contains all the redox centers.

It is found in the cell inner membrane. It carries out the reaction a quinone + NADH + 5 H(+)(in) = a quinol + NAD(+) + 4 H(+)(out). Functionally, NDH-1 shuttles electrons from NADH, via FMN and iron-sulfur (Fe-S) centers, to quinones in the respiratory chain. The immediate electron acceptor for the enzyme in this species is menaquinone. Couples the redox reaction to proton translocation (for every two electrons transferred, four hydrogen ions are translocated across the cytoplasmic membrane), and thus conserves the redox energy in a proton gradient required for the synthesis of ATP. This is NADH-quinone oxidoreductase subunit 14 (nqo14) from Thermus thermophilus (strain ATCC 27634 / DSM 579 / HB8).